The following is a 349-amino-acid chain: C-X-C chemokine receptor type 4 (349 aa).

Residues 1-18 are important for chemokine binding and signaling; the sequence is MEIYTSDNYSEEVGSGDY. Positions 1-23 are disordered; that stretch reads MEIYTSDNYSEEVGSGDYDSNKE. Residues 1 to 35 lie on the Extracellular side of the membrane; the sequence is MEIYTSDNYSEEVGSGDYDSNKEPCFRDENENFNR. The N-linked (GlcNAc...) asparagine glycan is linked to asparagine 8. Tyrosine 9 is modified (sulfotyrosine). O-linked (Xyl...) (chondroitin sulfate) serine glycosylation occurs at serine 15. Tyrosine 18 is subject to Sulfotyrosine. 2 disulfide bridges follow: cysteine 25–cysteine 271 and cysteine 106–cysteine 183. The chain crosses the membrane as a helical span at residues 36-60; sequence IFLPTIYFIIFLTGIVGNGLVILVM. Over 61-74 the chain is Cytoplasmic; it reads GYQKKLRSMTDKYR. A helical membrane pass occupies residues 75–96; sequence LHLSVADLLFVITLPFWAVDAM. The interval 91-94 is chemokine binding; the sequence is WAVD. Topologically, residues 97 to 107 are extracellular; it reads ADWYFGKFLCK. Residues 108–127 traverse the membrane as a helical segment; that stretch reads AVHIIYTVNLYSSVLILAFI. The segment at 110–114 is chemokine binding; it reads HIIYT. At 128-151 the chain is on the cytoplasmic side; sequence SLDRYLAIVHATNSQRPRKLLAEK. Positions 130–132 match the Important for signaling motif; it reads DRY. Positions 132–144 are involved in dimerization; when bound to chemokine; it reads YLAIVHATNSQRP. The helical transmembrane segment at 152–171 threads the bilayer; it reads AVYVGVWIPALLLTIPDIIF. Topologically, residues 172–192 are extracellular; that stretch reads ADVSQGDGRYICDRLYPDSLW. Residues 183–187 are chemokine binding, important for signaling; that stretch reads CDRLY. The involved in dimerization stretch occupies residues 188–207; the sequence is PDSLWMVVFQFQHIMVGLIL. The chain crosses the membrane as a helical span at residues 193 to 213; that stretch reads MVVFQFQHIMVGLILPGIVIL. The Cytoplasmic segment spans residues 214–238; it reads SCYCIIISKLSHSKGHQKRKALKTT. A helical membrane pass occupies residues 239 to 258; the sequence is VILILAFFACWLPYYVGISI. The Extracellular portion of the chain corresponds to 259–279; that stretch reads DSFILLEVIKQGCEFESVVHK. The interval 263–265 is involved in dimerization; it reads LLE. Residues 280 to 299 traverse the membrane as a helical segment; sequence WISITEALAFFHCCLNPILY. The Cytoplasmic segment spans residues 300 to 349; it reads AFLGAKFKSSAQHALNSMSRGSSLKILSKGKRGGHSSVSTESESSSFHSS. Residues serine 316 and serine 318 each carry the phosphoserine modification. Phosphoserine; by PKC and GRK6 is present on residues serine 321 and serine 322. The segment at 325–349 is disordered; the sequence is ILSKGKRGGHSSVSTESESSSFHSS. Serine 327 is modified (phosphoserine; by GRK6). A Glycyl lysine isopeptide (Lys-Gly) (interchain with G-Cter in ubiquitin) cross-link involves residue lysine 328. Over residues 334 to 349 the composition is skewed to low complexity; the sequence is HSSVSTESESSSFHSS. Residue serine 336 is modified to Phosphoserine; by GRK6. Phosphoserine is present on residues serine 345 and serine 348.

The protein belongs to the G-protein coupled receptor 1 family. Monomer. Can form homodimers. Interacts with CD164. Interacts with ARRB2; the interaction is dependent on the C-terminal phosphorylation of CXCR4 and allows activation of MAPK1 and MAPK3. Interacts with ARR3; the interaction is dependent on the C-terminal phosphorylation of CXCR4 and modulates calcium mobilization. Interacts with RNF113A; the interaction, enhanced by CXCL12, promotes CXCR4 ubiquitination and subsequent degradation. Interacts (via the cytoplasmic C-terminal) with ITCH (via the WW domains I and II); the interaction, enhanced by CXCL12, promotes CXCR4 ubiquitination and leads to its degradation. Interacts with extracellular ubiquitin. Interacts with DBN1; this interaction is enhanced by antigenic stimulation. Following LPS binding, may form a complex with GDF5, HSP90AA1 and HSPA8. Post-translationally, phosphorylated on agonist stimulation. Rapidly phosphorylated on serine and threonine residues in the C-terminal. Phosphorylation at Ser-321 and Ser-322 leads to recruitment of ITCH, ubiquitination and protein degradation. Ubiquitinated after ligand binding, leading to its degradation. Ubiquitinated by ITCH at the cell membrane on agonist stimulation. The ubiquitin-dependent mechanism, endosomal sorting complex required for transport (ESCRT), then targets CXCR4 for lysosomal degradation. This process is dependent also on prior Ser-/Thr-phosphorylation in the C-terminal of CXCR4. Also binding of ARRB1 to STAM negatively regulates CXCR4 sorting to lysosomes though modulating ubiquitination of SFR5S. In terms of processing, sulfation is required for efficient binding of CXCL12/SDF-1alpha and promotes its dimerization. Post-translationally, O- and N-glycosylated. N-glycosylation can mask coreceptor function. The O-glycosylation chondroitin sulfate attachment does not affect interaction with CXCL12/SDF-1alpha nor its coreceptor activity.

Its subcellular location is the cell membrane. It localises to the cell junction. It is found in the early endosome. The protein localises to the late endosome. The protein resides in the lysosome. In terms of biological role, receptor for the C-X-C chemokine CXCL12/SDF-1 that transduces a signal by increasing intracellular calcium ion levels and enhancing MAPK1/MAPK3 activation. Involved in the AKT signaling cascade. Plays a role in regulation of cell migration, e.g. during wound healing. Acts as a receptor for extracellular ubiquitin; leading to enhanced intracellular calcium ions and reduced cellular cAMP levels. Binds bacterial lipopolysaccharide (LPS) et mediates LPS-induced inflammatory response, including TNF secretion by monocytes. Involved in hematopoiesis and in cardiac ventricular septum formation. Also plays an essential role in vascularization of the gastrointestinal tract, probably by regulating vascular branching and/or remodeling processes in endothelial cells. Involved in cerebellar development. In the CNS, could mediate hippocampal-neuron survival. The chain is C-X-C chemokine receptor type 4 (Cxcr4) from Rattus norvegicus (Rat).